A 485-amino-acid chain; its full sequence is UDP-N-acetylmuramate--L-alanine ligase (485 aa).

An ATP-binding site is contributed by 129–135 (GTHGKTT).

It belongs to the MurCDEF family.

It localises to the cytoplasm. The enzyme catalyses UDP-N-acetyl-alpha-D-muramate + L-alanine + ATP = UDP-N-acetyl-alpha-D-muramoyl-L-alanine + ADP + phosphate + H(+). Its pathway is cell wall biogenesis; peptidoglycan biosynthesis. In terms of biological role, cell wall formation. The protein is UDP-N-acetylmuramate--L-alanine ligase of Vibrio parahaemolyticus serotype O3:K6 (strain RIMD 2210633).